Consider the following 408-residue polypeptide: DNA polymerase processivity factor (408 aa).

A Nuclear localization signal motif is present at residues 344-353 (KKRRNLLTKR).

It belongs to the herpesviridae DNA polymerase processivity factor family. In terms of assembly, interacts with the DNA polymerase catalytic subunit. Interacts with the origin-binding protein.

The protein resides in the host nucleus. Its function is as follows. Plays an essential role in viral DNA replication by acting as the polymerase accessory subunit. Associates with the viral polymerase to increase its processivity and forms high-affinity direct interactions with DNA. Facilitates the origin-binding protein loading onto DNA thus increasing its ability to assemble into a functional complex capable of unwinding duplex DNA. This chain is DNA polymerase processivity factor, found in Varicella-zoster virus (strain Dumas) (HHV-3).